A 131-amino-acid chain; its full sequence is Large ribosomal subunit protein bL12 (131 aa).

It belongs to the bacterial ribosomal protein bL12 family. In terms of assembly, homodimer. Part of the ribosomal stalk of the 50S ribosomal subunit. Forms a multimeric L10(L12)X complex, where L10 forms an elongated spine to which 2 to 4 L12 dimers bind in a sequential fashion. Binds GTP-bound translation factors.

Functionally, forms part of the ribosomal stalk which helps the ribosome interact with GTP-bound translation factors. Is thus essential for accurate translation. This is Large ribosomal subunit protein bL12 from Prochlorococcus marinus (strain MIT 9215).